The sequence spans 395 residues: Zinc-regulated GTPase metalloprotein activator 1E (395 aa).

The tract at residues methionine 1 to leucine 22 is disordered. The segment covering valine 8–proline 20 has biased composition (acidic residues). The psi-PxLVp motif motif lies at glutamate 17–proline 24. Glycine 49–threonine 56 contributes to the GTP binding site. Zn(2+) contacts are provided by cysteine 107, cysteine 109, and cysteine 110. A CXCC motif motif is present at residues cysteine 107 to cysteine 110. GTP-binding positions include cysteine 110–aspartate 114 and asparagine 203–aspartate 206. Positions isoleucine 274–valine 377 constitute a CobW C-terminal domain.

Belongs to the SIMIBI class G3E GTPase family. ZNG1 subfamily.

The protein resides in the nucleus. The enzyme catalyses GTP + H2O = GDP + phosphate + H(+). Zinc chaperone that directly transfers zinc cofactor to target metalloproteins, thereby activating them. Catalyzes zinc insertion into the active site of methionine aminopeptidase METAP1, which function to cleave the initiator methionine from polypeptides during or after protein translation. Mechanistically, the N-terminal psi-PxLVp motif binds to the C6H2-type zinc finger of inactive form of METAP1. After formation of the docked complex, zinc is transferred from the CXCC motif in the GTPase domain of ZNG1E to the zinc binding site in the peptidase domain of METAP1 in a process requiring GTP hydrolysis. GTP/GDP exchange is required for release of active METAP1. The chain is Zinc-regulated GTPase metalloprotein activator 1E from Homo sapiens (Human).